The chain runs to 313 residues: Methionyl-tRNA formyltransferase (313 aa).

Residue Ser-111–Pro-114 participates in (6S)-5,6,7,8-tetrahydrofolate binding.

This sequence belongs to the Fmt family.

It catalyses the reaction L-methionyl-tRNA(fMet) + (6R)-10-formyltetrahydrofolate = N-formyl-L-methionyl-tRNA(fMet) + (6S)-5,6,7,8-tetrahydrofolate + H(+). Its function is as follows. Attaches a formyl group to the free amino group of methionyl-tRNA(fMet). The formyl group appears to play a dual role in the initiator identity of N-formylmethionyl-tRNA by promoting its recognition by IF2 and preventing the misappropriation of this tRNA by the elongation apparatus. The sequence is that of Methionyl-tRNA formyltransferase from Mesoplasma florum (strain ATCC 33453 / NBRC 100688 / NCTC 11704 / L1) (Acholeplasma florum).